A 514-amino-acid chain; its full sequence is Lysine--tRNA ligase (514 aa).

Mg(2+)-binding residues include glutamate 424 and glutamate 431.

It belongs to the class-II aminoacyl-tRNA synthetase family. In terms of assembly, homodimer. The cofactor is Mg(2+).

The protein resides in the cytoplasm. The catalysed reaction is tRNA(Lys) + L-lysine + ATP = L-lysyl-tRNA(Lys) + AMP + diphosphate. This is Lysine--tRNA ligase from Cupriavidus necator (strain ATCC 17699 / DSM 428 / KCTC 22496 / NCIMB 10442 / H16 / Stanier 337) (Ralstonia eutropha).